The primary structure comprises 327 residues: Phenylalanine--tRNA ligase alpha subunit (327 aa).

E252 contributes to the Mg(2+) binding site.

This sequence belongs to the class-II aminoacyl-tRNA synthetase family. Phe-tRNA synthetase alpha subunit type 1 subfamily. In terms of assembly, tetramer of two alpha and two beta subunits. It depends on Mg(2+) as a cofactor.

The protein resides in the cytoplasm. It carries out the reaction tRNA(Phe) + L-phenylalanine + ATP = L-phenylalanyl-tRNA(Phe) + AMP + diphosphate + H(+). This chain is Phenylalanine--tRNA ligase alpha subunit, found in Salmonella choleraesuis (strain SC-B67).